We begin with the raw amino-acid sequence, 285 residues long: NAD kinase (285 aa).

The active-site Proton acceptor is the aspartate 64. Residues 64–65, 140–141, arginine 151, arginine 168, aspartate 170, and 181–186 each bind NAD(+); these read DG, ND, and TGYNLS.

This sequence belongs to the NAD kinase family. A divalent metal cation serves as cofactor.

It localises to the cytoplasm. It carries out the reaction NAD(+) + ATP = ADP + NADP(+) + H(+). In terms of biological role, involved in the regulation of the intracellular balance of NAD and NADP, and is a key enzyme in the biosynthesis of NADP. Catalyzes specifically the phosphorylation on 2'-hydroxyl of the adenosine moiety of NAD to yield NADP. This is NAD kinase from Lachnoclostridium phytofermentans (strain ATCC 700394 / DSM 18823 / ISDg) (Clostridium phytofermentans).